Here is a 329-residue protein sequence, read N- to C-terminus: NAD(+) hydrolase TcpA (329 aa).

In terms of domain architecture, MPN spans 5–134 (VSISYLALEQ…ADCVRFYTVR (130 aa)). Residues 192–324 (FEYDVFICHA…YVVNEILRVL (133 aa)) form the TIR domain. Residues 201 to 202 (AH) and Ser-231 contribute to the NAD(+) site. Glu-267 is a catalytic residue.

The enzyme catalyses NAD(+) + H2O = ADP-D-ribose + nicotinamide + H(+). Functionally, NAD(+) hydrolase (NADase) that catalyzes cleavage of NAD(+) into ADP-D-ribose (ADPR) and nicotinamide. This is NAD(+) hydrolase TcpA from Theionarchaea archaeon (strain DG-70-1).